The chain runs to 468 residues: Glutathione reductase (468 aa).

Residues Ser17 and Gly18 each contribute to the FAD site. Residue Ser17 coordinates glutathione. Glutathione is bound at residue Arg24. Residues Glu38, Thr45, Cys46, and Lys54 each contribute to the FAD site. A disulfide bridge connects residues Cys46 and Cys51. Residue Tyr103 participates in glutathione binding. Ala119 lines the FAD pocket. Residues Ala185, Ile188, Glu191, Arg208, Arg214, and Gly276 each coordinate NADP(+). Position 317 (Asp317) interacts with FAD. Residue Glu323 participates in NADP(+) binding. Thr325 is a binding site for FAD. Arg333 contacts glutathione. Val358 is a binding site for NADP(+). Lys410 lines the glutathione pocket. His457 is an FAD binding site. His457 functions as the Proton acceptor in the catalytic mechanism.

This sequence belongs to the class-I pyridine nucleotide-disulfide oxidoreductase family. In terms of assembly, homodimer. FAD is required as a cofactor.

Its subcellular location is the cytoplasm. It localises to the mitochondrion. It catalyses the reaction 2 glutathione + NADP(+) = glutathione disulfide + NADPH + H(+). Catalyzes the reduction of glutathione disulfide (GSSG) to reduced glutathione (GSH). Constitutes the major mechanism to maintain a high GSH:GSSG ratio in the cytosol. In Neurospora crassa (strain ATCC 24698 / 74-OR23-1A / CBS 708.71 / DSM 1257 / FGSC 987), this protein is Glutathione reductase (gtr-1).